The chain runs to 374 residues: uncharacterized protein (374 aa).

A disordered region spans residues 182–201 (PALGESPQGQKSSASSDKAV). Residues 188-197 (PQGQKSSASS) are compositionally biased toward polar residues.

This is an uncharacterized protein from Rattus norvegicus (Rat).